Here is a 364-residue protein sequence, read N- to C-terminus: Abhydrolase domain-containing protein C57A10.08c (364 aa).

Residues 1–8 (MYFFTISR) lie on the Cytoplasmic side of the membrane. Residues 9–29 (LTSFISYGILGALGILTFLYL) traverse the membrane as a helical; Signal-anchor for type II membrane protein segment. Residues 30–364 (YDAYLAKSFQ…DKFSTTDHNI (335 aa)) lie on the Lumenal side of the membrane. Catalysis depends on serine 183, which acts as the Charge relay system. Asparagine 326 carries an N-linked (GlcNAc...) asparagine glycan. The active-site Charge relay system is the histidine 336.

Belongs to the AB hydrolase superfamily.

The protein resides in the endoplasmic reticulum membrane. The chain is Abhydrolase domain-containing protein C57A10.08c from Schizosaccharomyces pombe (strain 972 / ATCC 24843) (Fission yeast).